We begin with the raw amino-acid sequence, 282 residues long: Undecaprenyl-diphosphatase (282 aa).

Transmembrane regions (helical) follow at residues 40–60 (GAAFSAIVQIGTLAAVLIYFY), 87–107 (MGWMIAAGTMPIVILGLLFKT), 116–136 (LYWISVALIVLALMLTLAEWL), 153–173 (IGWKEALLIGLAQSIALIPGS), 196–216 (FSFLLSLPAVFAAGIYQLYET), 229–249 (NLAVATLFAGIVGYASIAFLI), and 256–276 (STALFILYRIALGVGILGLIA).

Belongs to the UppP family.

It localises to the cell inner membrane. It catalyses the reaction di-trans,octa-cis-undecaprenyl diphosphate + H2O = di-trans,octa-cis-undecaprenyl phosphate + phosphate + H(+). Functionally, catalyzes the dephosphorylation of undecaprenyl diphosphate (UPP). Confers resistance to bacitracin. This is Undecaprenyl-diphosphatase from Chlorobium phaeobacteroides (strain BS1).